Consider the following 462-residue polypeptide: Coagulation factor IX (462 aa).

The first 21 residues, 1 to 21 (MADAPGLIPIFLLGYLLSTEC), serve as a signal peptide directing secretion. Positions 22–39 (AVFLDRENATKILTRPKR) are excised as a propeptide. Ca(2+)-binding residues include tyrosine 40, asparagine 41, glutamate 46, glutamate 47, glutamate 54, glutamate 56, glutamate 59, glutamate 60, glutamate 65, glutamate 66, and glutamate 69. One can recognise a Gla domain in the interval 40 to 86 (YNSGKLEEFVQGNLERECIEERCSFEEAREVFENTEKTTEFWKQYVD). Residues glutamate 46, glutamate 47, glutamate 54, glutamate 56, glutamate 59, glutamate 60, glutamate 65, glutamate 66, glutamate 69, glutamate 72, and glutamate 75 each carry the 4-carboxyglutamate modification. Position 54 (glutamate 54) interacts with Mg(2+). Residues cysteine 57 and cysteine 62 are joined by a disulfide bond. A Mg(2+)-binding site is contributed by glutamate 59. Glutamate 65 is a binding site for Mg(2+). Mg(2+) is bound at residue glutamate 69. Glutamate 75 provides a ligand contact to Ca(2+). A Mg(2+)-binding site is contributed by glutamate 75. An O-linked (GalNAc...) threonine glycan is attached at threonine 78. The Ca(2+) site is built by glutamate 79, aspartate 86, glycine 87, and glutamine 89. The residue at position 79 (glutamate 79) is a 4-carboxyglutamate. Residue glutamate 79 participates in Mg(2+) binding. One can recognise an EGF-like; calcium-binding domain in the interval 86–122 (DGDQCESNPCLNGGICKDDINSYECWCQAGFEGRNCE). Intrachain disulfides connect cysteine 90-cysteine 101, cysteine 95-cysteine 110, cysteine 112-cysteine 121, cysteine 127-cysteine 138, cysteine 134-cysteine 148, cysteine 150-cysteine 163, cysteine 171-cysteine 336, cysteine 253-cysteine 269, cysteine 383-cysteine 397, and cysteine 408-cysteine 436. The O-linked (Glc...) serine glycan is linked to serine 92. Residues aspartate 103 and aspartate 104 each coordinate Ca(2+). Aspartate 103 is modified ((3R)-3-hydroxyaspartate). Residue serine 107 is modified to Phosphoserine. The propeptide at 186–227 (AETVFSNTDYGNSTELILDDITNSTILDNLTENSEPINDFTR) is activation peptide. Residue tyrosine 195 is modified to Sulfotyrosine. Serine 198 carries the post-translational modification Phosphoserine. Threonine 199 carries the phosphothreonine; alternate modification. The O-linked (GalNAc...) threonine; alternate glycan is linked to threonine 199. Residues asparagine 208 and asparagine 214 are each glycosylated (N-linked (GlcNAc...) asparagine). O-linked (GalNAc...) threonine glycans are attached at residues threonine 216 and threonine 226. A Peptidase S1 domain is found at 228–460 (VVGGENAKPG…YVNWIKEKTK (233 aa)). Histidine 268 functions as the Charge relay system in the catalytic mechanism. The Ca(2+) site is built by glutamate 282, asparagine 284, glutamate 287, glutamate 289, and glutamate 292. A glycan (N-linked (GlcNAc...) asparagine) is linked at asparagine 307. Aspartate 316 (charge relay system) is an active-site residue. Serine 412 serves as the catalytic Charge relay system.

The protein belongs to the peptidase S1 family. In terms of assembly, heterodimer of a light chain and a heavy chain; disulfide-linked. Interacts (inactive and activated) with F11 (activated) in calcium-dependent manner. Interacts with SERPINC1. Interacts (inactive and activated) with nitrophorin-2, an anticoagulant protein from Rhodnius prolixus. Post-translationally, activated by factor XIa, which excises the activation peptide. The propeptide can also be removed by snake venom protease. Activated by coagulation factor VIIa-tissue factor (F7-F3) complex in calcium-dependent manner. The iron and 2-oxoglutarate dependent 3-hydroxylation of aspartate and asparagine is (R) stereospecific within EGF domains. In terms of processing, predominantly O-glucosylated at Ser-92 by POGLUT1 in vitro.

It is found in the secreted. The catalysed reaction is Selective cleavage of Arg-|-Ile bond in factor X to form factor Xa.. Its function is as follows. Factor IX is a vitamin K-dependent plasma protein that participates in the intrinsic pathway of blood coagulation by converting factor X to its active form in the presence of Ca(2+) ions, phospholipids, and factor VIIIa. This chain is Coagulation factor IX (F9), found in Rattus norvegicus (Rat).